The sequence spans 210 residues: uncharacterized protein (210 aa).

Positions 101–114 are enriched in low complexity; the sequence is QELPEPSSPQSQSS. The tract at residues 101–166 is disordered; the sequence is QELPEPSSPQ…SSGVSSDLQK (66 aa). A compositionally biased stretch (polar residues) spans 147–164; that stretch reads RSTSPVTASTSSGVSSDL.

This is an uncharacterized protein from Alcelaphine herpesvirus 1 (strain C500) (AlHV-1).